A 363-amino-acid chain; its full sequence is NAD(P)H-quinone oxidoreductase subunit 1, chloroplastic (363 aa).

The next 6 membrane-spanning stretches (helical) occupy residues 30–50 (FLPI…IVWL), 104–124 (IAVI…HLVL), 129–149 (IGVF…LMSG), 248–268 (YSGI…LVSS), 300–320 (VFGT…FLFI), and 343–363 (FLLP…LLSL).

Belongs to the complex I subunit 1 family. In terms of assembly, NDH is composed of at least 16 different subunits, 5 of which are encoded in the nucleus.

The protein resides in the plastid. It localises to the chloroplast thylakoid membrane. The catalysed reaction is a plastoquinone + NADH + (n+1) H(+)(in) = a plastoquinol + NAD(+) + n H(+)(out). It catalyses the reaction a plastoquinone + NADPH + (n+1) H(+)(in) = a plastoquinol + NADP(+) + n H(+)(out). NDH shuttles electrons from NAD(P)H:plastoquinone, via FMN and iron-sulfur (Fe-S) centers, to quinones in the photosynthetic chain and possibly in a chloroplast respiratory chain. The immediate electron acceptor for the enzyme in this species is believed to be plastoquinone. Couples the redox reaction to proton translocation, and thus conserves the redox energy in a proton gradient. The polypeptide is NAD(P)H-quinone oxidoreductase subunit 1, chloroplastic (Eucalyptus globulus subsp. globulus (Tasmanian blue gum)).